Here is a 414-residue protein sequence, read N- to C-terminus: Multifunctional CCA protein (414 aa).

Residues glycine 8 and arginine 11 each contribute to the ATP site. Positions 8 and 11 each coordinate CTP. 2 residues coordinate Mg(2+): aspartate 21 and aspartate 23. ATP contacts are provided by arginine 91, arginine 137, and arginine 140. Arginine 91, arginine 137, and arginine 140 together coordinate CTP. The HD domain occupies 228-329 (TGIHTLMVLE…VKLFDKGDFW (102 aa)).

The protein belongs to the tRNA nucleotidyltransferase/poly(A) polymerase family. Bacterial CCA-adding enzyme type 1 subfamily. Monomer. Can also form homodimers and oligomers. Requires Mg(2+) as cofactor. Ni(2+) serves as cofactor.

It carries out the reaction a tRNA precursor + 2 CTP + ATP = a tRNA with a 3' CCA end + 3 diphosphate. It catalyses the reaction a tRNA with a 3' CCA end + 2 CTP + ATP = a tRNA with a 3' CCACCA end + 3 diphosphate. Functionally, catalyzes the addition and repair of the essential 3'-terminal CCA sequence in tRNAs without using a nucleic acid template. Adds these three nucleotides in the order of C, C, and A to the tRNA nucleotide-73, using CTP and ATP as substrates and producing inorganic pyrophosphate. tRNA 3'-terminal CCA addition is required both for tRNA processing and repair. Also involved in tRNA surveillance by mediating tandem CCA addition to generate a CCACCA at the 3' terminus of unstable tRNAs. While stable tRNAs receive only 3'-terminal CCA, unstable tRNAs are marked with CCACCA and rapidly degraded. This is Multifunctional CCA protein from Shewanella frigidimarina (strain NCIMB 400).